A 512-amino-acid chain; its full sequence is Maturase K (512 aa).

Belongs to the intron maturase 2 family. MatK subfamily.

The protein localises to the plastid. Its subcellular location is the chloroplast. Functionally, usually encoded in the trnK tRNA gene intron. Probably assists in splicing its own and other chloroplast group II introns. In Lilium henryi (Henry's lily), this protein is Maturase K.